The chain runs to 181 residues: Adenylate kinase (181 aa).

ATP is bound at residue 10-15; the sequence is GAGKGT. An NMP region spans residues 30–59; that stretch reads STGELFRRNIEEGTKLGVEAKRYLDAGDLV. Residues Thr31, Arg36, 57–59, 85–88, and Gln92 each bind AMP; these read DLV and GYPR. The LID stretch occupies residues 126-132; the sequence is GRGRADD. Position 127 (Arg127) interacts with ATP. AMP contacts are provided by Arg129 and Arg140. Gly166 lines the ATP pocket.

Belongs to the adenylate kinase family. Monomer.

It is found in the cytoplasm. The catalysed reaction is AMP + ATP = 2 ADP. It functions in the pathway purine metabolism; AMP biosynthesis via salvage pathway; AMP from ADP: step 1/1. Catalyzes the reversible transfer of the terminal phosphate group between ATP and AMP. Plays an important role in cellular energy homeostasis and in adenine nucleotide metabolism. The polypeptide is Adenylate kinase (Mycobacterium tuberculosis (strain ATCC 25177 / H37Ra)).